The chain runs to 253 residues: Prolactin-7A2 (253 aa).

A signal peptide spans 1 to 30 (MSFSFSQPCPSGALLLVVVSSLLLWENVAS). Residues Asn36, Asn103, and Asn135 are each glycosylated (N-linked (GlcNAc...) asparagine). Disulfide bonds link Cys101–Cys218 and Cys235–Cys244.

This sequence belongs to the somatotropin/prolactin family. As to expression, expression restricted to the placental tissue. Expressed only in the spongiotrophoblasts.

The protein localises to the secreted. In Mus musculus (Mouse), this protein is Prolactin-7A2 (Prl7a2).